The following is a 117-amino-acid chain: Large ribosomal subunit protein bL19 (117 aa).

The protein belongs to the bacterial ribosomal protein bL19 family.

This protein is located at the 30S-50S ribosomal subunit interface and may play a role in the structure and function of the aminoacyl-tRNA binding site. The chain is Large ribosomal subunit protein bL19 from Shewanella sediminis (strain HAW-EB3).